A 422-amino-acid polypeptide reads, in one-letter code: 3-phosphoshikimate 1-carboxyvinyltransferase (422 aa).

3 residues coordinate 3-phosphoshikimate: K20, S21, and R25. K20 is a binding site for phosphoenolpyruvate. The phosphoenolpyruvate site is built by G92 and R120. Residues S163, S164, Q165, S191, D304, and K331 each contribute to the 3-phosphoshikimate site. A phosphoenolpyruvate-binding site is contributed by Q165. Catalysis depends on D304, which acts as the Proton acceptor. Positions 335 and 377 each coordinate phosphoenolpyruvate.

Belongs to the EPSP synthase family. As to quaternary structure, monomer.

Its subcellular location is the cytoplasm. It catalyses the reaction 3-phosphoshikimate + phosphoenolpyruvate = 5-O-(1-carboxyvinyl)-3-phosphoshikimate + phosphate. It functions in the pathway metabolic intermediate biosynthesis; chorismate biosynthesis. Catalyzes the transfer of the enolpyruvyl moiety of phosphoenolpyruvate (PEP) to the 5-hydroxyl of shikimate-3-phosphate (S3P) to produce enolpyruvyl shikimate-3-phosphate and inorganic phosphate. This chain is 3-phosphoshikimate 1-carboxyvinyltransferase, found in Methanocorpusculum labreanum (strain ATCC 43576 / DSM 4855 / Z).